The chain runs to 777 residues: Degenerin unc-8 (777 aa).

The Cytoplasmic portion of the chain corresponds to 1–128 (MSPLLTWNLI…VATSSFFGRY (128 aa)). The helical transmembrane segment at 129-149 (VWAALFMCMLMAFLLQTYWTM) threads the bilayer. Topologically, residues 150–689 (SEYLQYRTII…KETAGYTLVN (540 aa)) are extracellular. 7 N-linked (GlcNAc...) asparagine glycosylation sites follow: asparagine 274, asparagine 319, asparagine 357, asparagine 411, asparagine 453, asparagine 533, and asparagine 597. Residues 690-710 (LFSDFGGNIGLWIGFSVITFA) traverse the membrane as a helical segment. The Cytoplasmic portion of the chain corresponds to 711–777 (EFAELFCEIC…NESTKELMSK (67 aa)). Residues 752–777 (QRSPKKSQPGEDEVSTNESTKELMSK) form a disordered region.

It belongs to the amiloride-sensitive sodium channel (TC 1.A.6) family.

It localises to the membrane. Functionally, sodium permeable non-voltage-sensitive ion channel. Involved in the activity-dependent removal of selected presynaptic proteins, such as synaptobrevin snb-1, and Ras-related rab-3, in the remodeling of GABAergic motor neurons. The sequence is that of Degenerin unc-8 from Caenorhabditis elegans.